Here is an 86-residue protein sequence, read N- to C-terminus: Putative membrane protein insertion efficiency factor (86 aa).

It belongs to the UPF0161 family.

Its subcellular location is the cell inner membrane. Functionally, could be involved in insertion of integral membrane proteins into the membrane. The polypeptide is Putative membrane protein insertion efficiency factor (Cellvibrio japonicus (strain Ueda107) (Pseudomonas fluorescens subsp. cellulosa)).